The following is a 968-amino-acid chain: Alanine--tRNA ligase, cytoplasmic (968 aa).

Met1 is subject to N-acetylmethionine. Phosphoserine occurs at positions 3 and 8. Lys19 bears the N6-acetyllysine mark. ATP-binding positions include Arg77, His95, Trp176, and 214–216 (IWN). The L-alanine site is built by Asn216 and Asp239. Gly243 serves as a coordination point for ATP. 2 positions are modified to phosphoserine: Ser399 and Ser555. His605, His609, Cys723, and His727 together coordinate Zn(2+). Residues 750-763 (RRIVAVTGAEAQKA) carry the Nuclear localization signal motif. Lys876 bears the N6-acetyllysine mark. Lys943 is subject to N6,N6,N6-trimethyllysine; alternate. Lys943 is subject to N6,N6-dimethyllysine; alternate. An N6-methyllysine; alternate modification is found at Lys943.

The protein belongs to the class-II aminoacyl-tRNA synthetase family. Monomer. Interacts with ANKRD16; the interaction is direct. Zn(2+) is required as a cofactor. In terms of processing, ISGylated. Methylation at 'Lys-943' by METTL21C.

It localises to the cytoplasm. Its subcellular location is the nucleus. It catalyses the reaction tRNA(Ala) + L-alanine + ATP = L-alanyl-tRNA(Ala) + AMP + diphosphate. The catalysed reaction is (S)-lactate + ATP + H(+) = (S)-lactoyl-AMP + diphosphate. It carries out the reaction (S)-lactoyl-AMP + L-lysyl-[protein] = N(6)-[(S)-lactoyl]-L-lysyl-[protein] + AMP + 2 H(+). Its activity is regulated as follows. The protein lactyltransferase activity is inhibited by beta-alanine. Catalyzes the attachment of alanine to tRNA(Ala) in a two-step reaction: alanine is first activated by ATP to form Ala-AMP and then transferred to the acceptor end of tRNA(Ala). Also edits incorrectly charged tRNA(Ala) via its editing domain. In presence of high levels of lactate, also acts as a protein lactyltransferase that mediates lactylation of lysine residues in target proteins, such as TEAD1, TP53/p53 and YAP1. Protein lactylation takes place in a two-step reaction: lactate is first activated by ATP to form lactate-AMP and then transferred to lysine residues of target proteins. Acts as an inhibitor of TP53/p53 activity by catalyzing lactylation of TP53/p53. Acts as a positive regulator of the Hippo pathway by mediating lactylation of TEAD1 and YAP1. This Pongo abelii (Sumatran orangutan) protein is Alanine--tRNA ligase, cytoplasmic (AARS1).